The sequence spans 290 residues: MRFDEAYSGKVFIASRPEWEEADAILYGMPMDWTVSYRPGSRFGPSRIREVSIGLEEYSPYLDRDLADLNFFDAGDIPLPFGNPQRSLDMIEEYVDSILEKGKFPMGMGGEHLVSWPVIKAMYKKYPDLAIIHFDAHTDLRVDYEGEPLSHSTPIRKAAELIGPHNVYSFGIRSGMKEEFEWAKENGMHISKFEVLEPLKEVLPKLAGRPVYVTIDIDVLDPAHAPGTGTVDAGGITSKELLASVHEIARSEVNVKGADLVEVAPVYDHSEQTANTASKIIREMLLGFVK.

The Mn(2+) site is built by His-112, Asp-135, His-137, Asp-139, Asp-216, and Asp-218.

It belongs to the arginase family. Agmatinase subfamily. Mn(2+) serves as cofactor.

The catalysed reaction is agmatine + H2O = urea + putrescine. The protein operates within amine and polyamine biosynthesis; putrescine biosynthesis via agmatine pathway; putrescine from agmatine: step 1/1. Its function is as follows. Catalyzes the formation of putrescine from agmatine. The polypeptide is Agmatinase (speB) (Bacillus subtilis (strain 168)).